The primary structure comprises 1031 residues: Toll-like receptor 9 (1031 aa).

The N-terminal stretch at 1 to 25 (MGPCHGALQPLSLLVQAAMLAVALA) is a signal peptide. Topologically, residues 26–817 (QGTLPPFLPC…LCLDESLSWD (792 aa)) are extracellular. An intrachain disulfide couples Cys-35 to Cys-45. 47–51 (WLFLK) lines the DNA pocket. 26 LRR repeats span residues 62–85 (RDNVTSLSLLSNRIHHLHDSDFAQ), 87–110 (SNLQKLNLKWNCPPAGLSPMHFPC), 122–147 (VPTLEELNLSYNGITTVPALPSSLVS), 150–166 (LSRTNILQLDPTSLTGL), 167–190 (HALRFLYMDGNCYYKNPCGRALEV), 198–221 (LGNLTHLSLKYNNLTTVPRSLPPS), 223–242 (EYLLLSYNHIVTLAPEDLAN), 243–268 (LTALRVLDVGGNCRRCDHARNPCVEC), 283–306 (LSRLEGLVLKDSSLYQLNPRWFRG), 308–332 (GNLTVLDLSENFLYDCITKTKAFQG), 333–356 (LAQLRRLNLSFNYHKKVSFAHLTL), 363–386 (LLSLQELDMHGIFFRSLSQKTLQP), 390–413 (LPMLQRLYLQMNFINQAQLGIFKD), 414–438 (FPGLRYIDLSDNRISGAVEPVATTG), 470–494 (CKNLSFTLDLSRNNLVTVQPEMFAQ), 496–519 (SRLQCLRLSHNSISQAVNGSQFVP), 520–543 (LTSLQVLDLSHNKLDLYHGRSFTE), 545–567 (PRLEALDLSYNSQPFSMRGVGHN), 574–598 (LPTLRYLSLAHNGIHSRVSQQLCST), 600–622 (LWALDFSGNSLSQMWAEGDLYLR), 627–650 (LRSLIRLDLSQNRLHTLLPCTLGN), 652–675 (PKSLQLLRLRNNYLAFFNWSSLTL), 676–699 (LPNLETLDLAGNQLKALSNGSLPS), 701–723 (TQLQRLDVSRNSIIFVVPGFFAL), 724–747 (ATRLRELNLSANALRTVEPSWFGF), and 749–772 (AGSLEVLDVSANPLHCACGAAFVD). The N-linked (GlcNAc...) asparagine glycan is linked to Asn-64. DNA-binding positions include 72-77 (SNRIHH) and 95-109 (KWNCPPAGLSPMHFP). Cys-98 and Cys-110 are joined by a disulfide. A glycan (N-linked (GlcNAc...) asparagine) is linked at Asn-129. Residues Tyr-132, Arg-152, and 179–181 (YYK) contribute to the DNA site. A disulfide bridge connects residues Cys-178 and Cys-184. The N-linked (GlcNAc...) asparagine glycan is linked to Asn-200. Tyr-208 lines the DNA pocket. N-linked (GlcNAc...) asparagine glycans are attached at residues Asn-210 and Asn-242. 2 disulfide bridges follow: Cys-255–Cys-268 and Cys-258–Cys-265. Cys-258 carries S-palmitoyl cysteine lipidation. Arg-262 provides a ligand contact to DNA. Cys-265 carries the S-palmitoyl cysteine lipid modification. Residues Asn-309 and Asn-340 are each glycosylated (N-linked (GlcNAc...) asparagine). A disulfide bond links Cys-470 and Cys-500. N-linked (GlcNAc...) asparagine glycans are attached at residues Asn-472 and Asn-513. The N-linked (GlcNAc...) asparagine glycan is linked to Asn-567. 2 N-linked (GlcNAc...) asparagine glycosylation sites follow: Asn-669 and Asn-694. N-linked (GlcNAc...) asparagine glycosylation is present at Asn-731. 2 cysteine pairs are disulfide-bonded: Cys-764/Cys-790 and Cys-766/Cys-809. The chain crosses the membrane as a helical span at residues 818–838 (CFGLSLLVVALGLAMPMLHHL). Over 839-1031 (CGWDLWYCFH…NFCRGPTMAE (193 aa)) the chain is Cytoplasmic. A TIR domain is found at 866-1011 (LSYDAFVVFD…SFWAQLGMAL (146 aa)).

It belongs to the Toll-like receptor family. In terms of assembly, monomer and homodimer. Exists as a monomer in the absence of unmethylated cytidine-phosphate-guanosine (CpG) ligand. Proteolytic processing of an insertion loop (Z-loop) is required for homodimerization upon binding to the unmethylated CpG ligand leading to its activation. Interacts with MYD88 via their respective TIR domains. Interacts with BTK. Interacts (via transmembrane domain) with UNC93B1. Interacts with CD300LH; the interaction may promote full activation of TLR9-triggered innate responses. Interacts with CNPY3 and HSP90B1; this interaction is required for proper folding in the endoplasmic reticulum. Interacts with SMPDL3B. Interacts with CD82; this interaction is essential for TLR9-dependent myddosome formation in response to CpG stimulation. Activated by proteolytic cleavage of the flexible loop between repeats LRR14 and LRR15 within the ectodomain. Cleavage requires UNC93B1. Proteolytically processed by first removing the majority of the ectodomain by either asparagine endopeptidase (AEP) or a cathepsin followed by a trimming event that is solely cathepsin mediated and required for optimal receptor signaling. Post-translationally, palmitoylated by ZDHHC3 in the Golgi regulates TLR9 trafficking from the Golgi to endosomes. Depalmitoylation by PPT1 controls the release of TLR9 from UNC93B1 in endosomes. Expressed in airway epithelium, vascular endothelium and inflammatory cells in blood vessels of the lungs (at protein level). Highly expressed in pulmonary intravascular macrophages (PIMs) and to a lesser extent in alveolar macrophages, neutrophiles, type-II alveolar epithelial cells and bronchial epithelial cells of the lungs (at protein level). High constitutive intracellular expression in leukocytes including polymorphonuclear leukocytes (PMNs), CD4 and CD8 T cells (at protein level). Expressed throughout the respiratory tract including larynx, upper, middle and lower trachea, and bronchus in isolated equine respiratory epithelial cells (ERECs) and in fully differentiated ERECs cultured at the air-fluid interface (AFI) (at protein level). Constitutively expressed in peripheral blood mononuclear cells (PBMCs), lymph nodes and spleen. The level of expression in PBMCs is about 2- to 3-fold higher than that in lymph nodes and spleen. Very low expression in liver, heart, lung, kidney, small intestine, colon and stomach. Low expression in the airway tissue epithelium of the larynx, upper trachea, middle tranchea, lower trachea, bronchus and spleen, and more abundant expression in mesenteric lymph node. Not expressed in fully differentiated bronchus epithelial cells cultured at the AFI for four weeks. Expressed in gingival tissue.

It localises to the endoplasmic reticulum membrane. It is found in the endosome. Its subcellular location is the lysosome. The protein localises to the cytoplasmic vesicle. The protein resides in the phagosome. It localises to the cell membrane. It is found in the cytoplasm. Its subcellular location is the nucleus. In terms of biological role, key component of innate and adaptive immunity. TLRs (Toll-like receptors) control host immune response against pathogens through recognition of molecular patterns specific to microorganisms. TLR9 is a nucleotide-sensing TLR which is activated by unmethylated cytidine-phosphate-guanosine (CpG) dinucleotides. Acts via MYD88 and TRAF6, leading to NF-kappa-B activation, cytokine secretion and the inflammatory response. Upon CpG stimulation, induces B-cell proliferation, activation, survival and antibody production. This is Toll-like receptor 9 from Equus caballus (Horse).